The sequence spans 209 residues: High frequency lysogenization protein HflD homolog (209 aa).

The protein belongs to the HflD family.

It is found in the cytoplasm. Its subcellular location is the cell inner membrane. The polypeptide is High frequency lysogenization protein HflD homolog (Marinomonas sp. (strain MWYL1)).